The chain runs to 572 residues: Proline--tRNA ligase (572 aa).

It belongs to the class-II aminoacyl-tRNA synthetase family. ProS type 1 subfamily. Homodimer.

The protein localises to the cytoplasm. It catalyses the reaction tRNA(Pro) + L-proline + ATP = L-prolyl-tRNA(Pro) + AMP + diphosphate. In terms of biological role, catalyzes the attachment of proline to tRNA(Pro) in a two-step reaction: proline is first activated by ATP to form Pro-AMP and then transferred to the acceptor end of tRNA(Pro). As ProRS can inadvertently accommodate and process non-cognate amino acids such as alanine and cysteine, to avoid such errors it has two additional distinct editing activities against alanine. One activity is designated as 'pretransfer' editing and involves the tRNA(Pro)-independent hydrolysis of activated Ala-AMP. The other activity is designated 'posttransfer' editing and involves deacylation of mischarged Ala-tRNA(Pro). The misacylated Cys-tRNA(Pro) is not edited by ProRS. This chain is Proline--tRNA ligase, found in Bacillus licheniformis (strain ATCC 14580 / DSM 13 / JCM 2505 / CCUG 7422 / NBRC 12200 / NCIMB 9375 / NCTC 10341 / NRRL NRS-1264 / Gibson 46).